The sequence spans 174 residues: Repair DNA polymerase X (174 aa).

Residues Arg42–Asp51 are involved in ssDNA binding. The Mg(2+) site is built by Asp49 and Asp51. Residues Cys81 and Cys86 are joined by a disulfide bond. A Mg(2+)-binding site is contributed by Asp100.

This sequence belongs to the DNA polymerase type-X family. Requires Mg(2+) as cofactor.

The protein resides in the virion. The enzyme catalyses DNA(n) + a 2'-deoxyribonucleoside 5'-triphosphate = DNA(n+1) + diphosphate. Error-prone polymerase lacking a proofreading 3'-5' exonuclease which catalyzes the gap-filling reaction during the DNA repair process. Specifically binds intermediates in the single-nucleotide base-excision repair process. Also catalyzes DNA polymerization with low nucleotide-insertion fidelity. Probably acts as a strategic DNA mutase, which gives rise to a rapid emergence of variants. Generates mismatched G-G pairs, in that case, the polymerase first binds the deoxynucleotide followed by mismatch formation. Together with the viral DNA ligase, fills the single nucleotide gaps generated by the AP endonuclease. Binds DNA with high affinity via the helix alphaE. In Ornithodoros (relapsing fever ticks), this protein is Repair DNA polymerase X.